The primary structure comprises 109 residues: CRISPR-associated endoribonuclease Cas2 (109 aa).

A Mg(2+)-binding site is contributed by Asp-8.

This sequence belongs to the CRISPR-associated endoribonuclease Cas2 protein family. As to quaternary structure, homodimer, forms a heterotetramer with a Cas1 homodimer. The cofactor is Mg(2+).

CRISPR (clustered regularly interspaced short palindromic repeat), is an adaptive immune system that provides protection against mobile genetic elements (viruses, transposable elements and conjugative plasmids). CRISPR clusters contain sequences complementary to antecedent mobile elements and target invading nucleic acids. CRISPR clusters are transcribed and processed into CRISPR RNA (crRNA). Functions as a ssRNA-specific endoribonuclease. Involved in the integration of spacer DNA into the CRISPR cassette. In Streptococcus mutans serotype c (strain ATCC 700610 / UA159), this protein is CRISPR-associated endoribonuclease Cas2.